The sequence spans 214 residues: MNQHLLEQFGTTHERVERGLAALRTGQGVLVADDADRENEGDLIFAAETLTPAQMAMMIRECSGIVCLCLPEERVSRLGLPMMVAHNTSSMGTAFTISIEAAEGVTTGVSAADRVRTVQAAIDDAACPGCLRSPGHVFPLRASPGGVLERRGHTEATVDLMRLAGLKPYGVLCELTNPDGTMARLPQLVDFAQRNRMTVLTVEDLVAYRQDKGL.

Residues 37-38 (RE), D42, 150-154 (RRGHT), and E174 each bind D-ribulose 5-phosphate. Mg(2+) is bound at residue E38. Mg(2+) is bound at residue H153.

Belongs to the DHBP synthase family. As to quaternary structure, homodimer. Mg(2+) is required as a cofactor. Mn(2+) serves as cofactor.

The enzyme catalyses D-ribulose 5-phosphate = (2S)-2-hydroxy-3-oxobutyl phosphate + formate + H(+). It participates in cofactor biosynthesis; riboflavin biosynthesis; 2-hydroxy-3-oxobutyl phosphate from D-ribulose 5-phosphate: step 1/1. Its function is as follows. Catalyzes the conversion of D-ribulose 5-phosphate to formate and 3,4-dihydroxy-2-butanone 4-phosphate. This is 3,4-dihydroxy-2-butanone 4-phosphate synthase from Nitratidesulfovibrio vulgaris (strain DP4) (Desulfovibrio vulgaris).